Reading from the N-terminus, the 220-residue chain is Large ribosomal subunit protein uL16 (220 aa).

It belongs to the universal ribosomal protein uL16 family. Component of the small ribosomal subunit. Mature ribosomes consist of a small (40S) and a large (60S) subunit. The 40S subunit contains about 33 different proteins and 1 molecule of RNA (18S). The 60S subunit contains about 49 different proteins and 3 molecules of RNA (25S, 5.8S and 5S).

In Euphorbia esula (Leafy spurge), this protein is Large ribosomal subunit protein uL16 (RPL10).